A 1076-amino-acid chain; its full sequence is Nucleoporin NUP1 (1076 aa).

A compositionally biased stretch (low complexity) spans 1–11 (MSSNTSSVMSS). Residues 1–39 (MSSNTSSVMSSPRVEKRSFSSTLKSFFTNPNKKRPSSKK) are disordered. Ser2 is modified (N-acetylserine). The span at 19–30 (FSSTLKSFFTNP) shows a compositional bias: polar residues. Ser54 and Ser161 each carry phosphoserine. Disordered regions lie at residues 143–183 (SQSK…TNVG) and 224–260 (KKDN…ATGP). 2 stretches are compositionally biased toward polar residues: residues 154–170 (LCTS…SCTR) and 243–260 (NRNN…ATGP). One copy of the FXF 1 repeat lies at 336–338 (FDF). Residue Thr381 is modified to Phosphothreonine. Phosphoserine is present on Ser383. One copy of the FXF 2 repeat lies at 384-386 (FNF). The tract at residues 403 to 518 (TTLFNFGGKS…SFVFGASDKQ (116 aa)) is disordered. FXFG repeat units lie at residues 406 to 409 (FNFG) and 422 to 425 (FKFG). Over residues 426–439 (KTSEKSENHTESDA) the composition is skewed to basic and acidic residues. FXFG repeat units lie at residues 448–451 (FSFG) and 484–487 (FDFG). The span at 488 to 505 (KTGDQKETKKGESEKDAS) shows a compositional bias: basic and acidic residues. 4 FXFG repeats span residues 510–513 (FVFG), 525–528 (FTFG), 543–546 (FTFG), and 571–574 (FTFG). The interval 548 to 743 (AATAKETHTK…SMKSTASTAA (196 aa)) is disordered. FXF repeat units lie at residues 591-593 (FSF), 614-616 (FSF), 636-638 (FSF), and 657-659 (FTF). Composition is skewed to polar residues over residues 634–649 (PTFS…SSVV) and 658–667 (TFASSKTSQP). At Ser637 the chain carries Phosphoserine. The stretch at 671–674 (FSFG) is one FXFG 9 repeat. The FXF 7 repeat unit spans residues 689 to 691 (FSF). FXFG repeat units follow at residues 708–711 (FTFG) and 727–730 (FSFG). The span at 708–723 (FTFGGSTTNNTTTTST) shows a compositional bias: low complexity. One copy of the FXF 8 repeat lies at 753 to 755 (FSF). One copy of the FXFG 12 repeat lies at 800–803 (FSFG). FXF repeat units lie at residues 819–821 (FSF) and 866–868 (FGF). The stretch at 885-888 (FNFG) is one FXFG 13 repeat. The stretch at 929–931 (FNF) is one FXF 11 repeat. Residues 940–979 (GGSVFNMNGNTNANTVFAGSNNQPHQSQTPSFNTNSSFTP) are disordered. Residues 944–964 (FNMNGNTNANTVFAGSNNQPH) show a composition bias toward polar residues. Over residues 965–979 (QSQTPSFNTNSSFTP) the composition is skewed to low complexity. FG repeat units follow at residues 1008 to 1009 (FG), 1027 to 1028 (FG), and 1038 to 1039 (FG). The tract at residues 1025 to 1054 (SIFGGAGGVPTTSFGQPQSAPNQMGMGTNN) is disordered. Polar residues predominate over residues 1034–1045 (PTTSFGQPQSAP). Residues 1040–1076 (QPQSAPNQMGMGTNNGMSMGGGVMANRKIARMRHSKR) are interaction with KAP95.

In terms of assembly, component of the nuclear pore complex (NPC). NPC constitutes the exclusive means of nucleocytoplasmic transport. NPCs allow the passive diffusion of ions and small molecules and the active, nuclear transport receptor-mediated bidirectional transport of macromolecules such as proteins, RNAs, ribonucleoparticles (RNPs), and ribosomal subunits across the nuclear envelope. Due to its 8-fold rotational symmetry, all subunits are present with 8 copies or multiples thereof. Interacts through its FG repeats with nuclear transport receptors. Binds to the nuclear basket of the NPC through NUP60. Interacts with KAP122. Post-translationally, phosphorylated by CDC28.

The protein resides in the nucleus. It localises to the nuclear pore complex. It is found in the nucleus membrane. In terms of biological role, functions as a component of the nuclear pore complex (NPC). NPC components, collectively referred to as nucleoporins (NUPs), can play the role of both NPC structural components and of docking or interaction partners for transiently associated nuclear transport factors. Active directional transport is assured by both, a Phe-Gly (FG) repeat affinity gradient for these transport factors across the NPC and a transport cofactor concentration gradient across the nuclear envelope (GSP1 and GSP2 GTPases associated predominantly with GTP in the nucleus, with GDP in the cytoplasm). As one of the FG repeat nucleoporins NUP1 is involved in interactions with and guidance of nuclear transport receptors such as SRP1-KAP95 (importin alpha and beta) through the NPC. Like the closely related NUP2 it also plays an important role in disassembling and recycling SRP1-KAP95 to the cytoplasm after nuclear import. Upon entry of the heterotrimeric SRP1-KAP95-cargo complex in the nucleus, NUP1 binds through its C-terminus to KAP95, thus accelerating the release of KAP95 and, indirectly, of the nuclear localization signal (NLS)-containing cargo from the SRP1-KAP95-cargo complex. The protein is Nucleoporin NUP1 (NUP1) of Saccharomyces cerevisiae (strain ATCC 204508 / S288c) (Baker's yeast).